Here is a 131-residue protein sequence, read N- to C-terminus: Small ribosomal subunit protein uS8 (131 aa).

Belongs to the universal ribosomal protein uS8 family. In terms of assembly, part of the 30S ribosomal subunit. Contacts proteins S5 and S12.

In terms of biological role, one of the primary rRNA binding proteins, it binds directly to 16S rRNA central domain where it helps coordinate assembly of the platform of the 30S subunit. The sequence is that of Small ribosomal subunit protein uS8 from Hyphomonas neptunium (strain ATCC 15444).